Here is a 435-residue protein sequence, read N- to C-terminus: Type A flavoprotein fprA (435 aa).

Positions 48-228 are zinc metallo-hydrolase; it reads ANGTTYNAYA…PFRSFVAQVL (181 aa). Residues His-98, Glu-100, Asp-102, His-167, Asp-186, and His-243 each coordinate Fe cation. One can recognise a Flavodoxin-like domain in the interval 276–415; sequence LLIFYVSAYR…EGRAFGRRLA (140 aa).

This sequence in the N-terminal section; belongs to the zinc metallo-hydrolase group 3 family. As to quaternary structure, homodimer. FMN serves as cofactor. The cofactor is Fe cation.

In terms of biological role, low-potential electron donor to a number of redox enzymes. In Rhodobacter capsulatus (Rhodopseudomonas capsulata), this protein is Type A flavoprotein fprA (fprA).